An 89-amino-acid polypeptide reads, in one-letter code: Large ribosomal subunit protein eL34 (89 aa).

The tract at residues 1 to 22 (MPAPRYKSGSSKKVYRKAPGNS) is disordered.

It belongs to the eukaryotic ribosomal protein eL34 family.

In Methanococcus maripaludis (strain C7 / ATCC BAA-1331), this protein is Large ribosomal subunit protein eL34.